The chain runs to 278 residues: DNA-directed RNA polymerase subunit alpha (278 aa).

It belongs to the RNA polymerase alpha chain family. As to quaternary structure, in plastids the minimal PEP RNA polymerase catalytic core is composed of four subunits: alpha, beta, beta', and beta''. When a (nuclear-encoded) sigma factor is associated with the core the holoenzyme is formed, which can initiate transcription.

The protein localises to the plastid. The protein resides in the chloroplast. The enzyme catalyses RNA(n) + a ribonucleoside 5'-triphosphate = RNA(n+1) + diphosphate. In terms of biological role, DNA-dependent RNA polymerase catalyzes the transcription of DNA into RNA using the four ribonucleoside triphosphates as substrates. The chain is DNA-directed RNA polymerase subunit alpha (rpoA) from Chlorella vulgaris (Green alga).